Reading from the N-terminus, the 274-residue chain is Formamidopyrimidine-DNA glycosylase (274 aa).

The active-site Schiff-base intermediate with DNA is the proline 2. The active-site Proton donor is glutamate 3. The active-site Proton donor; for beta-elimination activity is lysine 58. Residues histidine 91 and arginine 110 each coordinate DNA. An FPG-type zinc finger spans residues 238-272; it reads QVYDKTGQECVRCGTIIEKIQLGGRGTHFCPNCQR. The Proton donor; for delta-elimination activity role is filled by arginine 262.

The protein belongs to the FPG family. As to quaternary structure, monomer. Zn(2+) is required as a cofactor.

The enzyme catalyses Hydrolysis of DNA containing ring-opened 7-methylguanine residues, releasing 2,6-diamino-4-hydroxy-5-(N-methyl)formamidopyrimidine.. The catalysed reaction is 2'-deoxyribonucleotide-(2'-deoxyribose 5'-phosphate)-2'-deoxyribonucleotide-DNA = a 3'-end 2'-deoxyribonucleotide-(2,3-dehydro-2,3-deoxyribose 5'-phosphate)-DNA + a 5'-end 5'-phospho-2'-deoxyribonucleoside-DNA + H(+). Involved in base excision repair of DNA damaged by oxidation or by mutagenic agents. Acts as a DNA glycosylase that recognizes and removes damaged bases. Has a preference for oxidized purines, such as 7,8-dihydro-8-oxoguanine (8-oxoG). Has AP (apurinic/apyrimidinic) lyase activity and introduces nicks in the DNA strand. Cleaves the DNA backbone by beta-delta elimination to generate a single-strand break at the site of the removed base with both 3'- and 5'-phosphates. The protein is Formamidopyrimidine-DNA glycosylase of Streptococcus pneumoniae (strain ATCC BAA-255 / R6).